The following is a 209-amino-acid chain: Methylated-DNA--protein-cysteine methyltransferase (209 aa).

Residue C5 coordinates Zn(2+). At S14 the chain carries Phosphoserine. Positions 24 and 29 each coordinate Zn(2+). Positions 35 to 57 (SGKTPSSDPKEAPASPELLGGPE) are disordered. H89 contributes to the Zn(2+) binding site. The DNA site is built by T99, Y118, Q119, N127, and R132. C149 functions as the Nucleophile; methyl group acceptor in the catalytic mechanism. Position 155 (S155) interacts with DNA. Residue S205 is modified to Phosphoserine.

This sequence belongs to the MGMT family. The cofactor is Zn(2+).

It is found in the nucleus. The catalysed reaction is a 6-O-methyl-2'-deoxyguanosine in DNA + L-cysteinyl-[protein] = S-methyl-L-cysteinyl-[protein] + a 2'-deoxyguanosine in DNA. It catalyses the reaction a 4-O-methyl-thymidine in DNA + L-cysteinyl-[protein] = a thymidine in DNA + S-methyl-L-cysteinyl-[protein]. Functionally, involved in the cellular defense against the biological effects of O6-methylguanine (O6-MeG) and O4-methylthymine (O4-MeT) in DNA. Repairs the methylated nucleobase in DNA by stoichiometrically transferring the methyl group to a cysteine residue in the enzyme. This is a suicide reaction: the enzyme is irreversibly inactivated. This is Methylated-DNA--protein-cysteine methyltransferase (MGMT) from Cricetulus griseus (Chinese hamster).